The sequence spans 242 residues: Ubiquitin-conjugating enzyme E2 6 (242 aa).

Residues 1 to 220 (MASRQSQKRL…HSTPSFGVQR (220 aa)) are Cytoplasmic-facing. In terms of domain architecture, UBC core spans 5–156 (QSQKRLTKEY…NQRFTKQFPD (152 aa)). The active-site Glycyl thioester intermediate is the cysteine 87. Residues 170-190 (AREQAAATTDSTDPEKPFDVR) are disordered. The helical transmembrane segment at 221–240 (FTLVGVVVAAFIAAYFNFFS) threads the bilayer.

It belongs to the ubiquitin-conjugating enzyme family.

The protein localises to the endoplasmic reticulum membrane. The enzyme catalyses S-ubiquitinyl-[E1 ubiquitin-activating enzyme]-L-cysteine + [E2 ubiquitin-conjugating enzyme]-L-cysteine = [E1 ubiquitin-activating enzyme]-L-cysteine + S-ubiquitinyl-[E2 ubiquitin-conjugating enzyme]-L-cysteine.. It participates in protein modification; protein ubiquitination. Functionally, catalyzes the covalent attachment of ubiquitin to other proteins. Functions in degradation of misfolded or regulated proteins localized in the endoplasmic reticulum (ER) lumen or membrane via the ubiquitin-proteasome system. Cognate E2 conjugating enzyme for the DOA10 ubiquitin ligase complex, which is part of the ERAD-C pathway responsible for the rapid degradation of membrane proteins with misfolded cytoplasmic domains. The chain is Ubiquitin-conjugating enzyme E2 6 (UBC6) from Debaryomyces hansenii (strain ATCC 36239 / CBS 767 / BCRC 21394 / JCM 1990 / NBRC 0083 / IGC 2968) (Yeast).